The primary structure comprises 388 residues: Succinate--CoA ligase [ADP-forming] subunit beta (388 aa).

Positions 9–244 (KSLFAEYGLP…PSQDDAREAH (236 aa)) constitute an ATP-grasp domain. ATP is bound by residues Lys46, 53-55 (GRG), Glu99, Thr102, and Glu107. Mg(2+) contacts are provided by Asn199 and Asp213. Substrate-binding positions include Asn264 and 321 to 323 (GIV).

It belongs to the succinate/malate CoA ligase beta subunit family. As to quaternary structure, heterotetramer of two alpha and two beta subunits. It depends on Mg(2+) as a cofactor.

The catalysed reaction is succinate + ATP + CoA = succinyl-CoA + ADP + phosphate. It carries out the reaction GTP + succinate + CoA = succinyl-CoA + GDP + phosphate. It functions in the pathway carbohydrate metabolism; tricarboxylic acid cycle; succinate from succinyl-CoA (ligase route): step 1/1. Functionally, succinyl-CoA synthetase functions in the citric acid cycle (TCA), coupling the hydrolysis of succinyl-CoA to the synthesis of either ATP or GTP and thus represents the only step of substrate-level phosphorylation in the TCA. The beta subunit provides nucleotide specificity of the enzyme and binds the substrate succinate, while the binding sites for coenzyme A and phosphate are found in the alpha subunit. This chain is Succinate--CoA ligase [ADP-forming] subunit beta, found in Shewanella woodyi (strain ATCC 51908 / MS32).